The sequence spans 120 residues: Small ribosomal subunit protein bS16 (120 aa).

Residues 81–120 (GLAKRPARNNPQKAEPGEKSKERAAKRAEKAAAPAEDAAA) form a disordered region. A compositionally biased stretch (basic and acidic residues) spans 95–110 (EPGEKSKERAAKRAEK). Positions 111-120 (AAAPAEDAAA) are enriched in low complexity.

Belongs to the bacterial ribosomal protein bS16 family.

The chain is Small ribosomal subunit protein bS16 from Methylorubrum populi (strain ATCC BAA-705 / NCIMB 13946 / BJ001) (Methylobacterium populi).